Consider the following 425-residue polypeptide: Multifunctional CCA protein (425 aa).

Positions 8 and 11 each coordinate ATP. 2 residues coordinate CTP: glycine 8 and arginine 11. 2 residues coordinate Mg(2+): aspartate 21 and aspartate 23. Arginine 91, arginine 141, and arginine 144 together coordinate ATP. Residues arginine 91, arginine 141, and arginine 144 each contribute to the CTP site. In terms of domain architecture, HD spans 230–331 (TGVHLMMVLD…VRLLERCDAI (102 aa)).

This sequence belongs to the tRNA nucleotidyltransferase/poly(A) polymerase family. Bacterial CCA-adding enzyme type 1 subfamily. As to quaternary structure, monomer. Can also form homodimers and oligomers. It depends on Mg(2+) as a cofactor. Ni(2+) serves as cofactor.

It carries out the reaction a tRNA precursor + 2 CTP + ATP = a tRNA with a 3' CCA end + 3 diphosphate. The catalysed reaction is a tRNA with a 3' CCA end + 2 CTP + ATP = a tRNA with a 3' CCACCA end + 3 diphosphate. Its function is as follows. Catalyzes the addition and repair of the essential 3'-terminal CCA sequence in tRNAs without using a nucleic acid template. Adds these three nucleotides in the order of C, C, and A to the tRNA nucleotide-73, using CTP and ATP as substrates and producing inorganic pyrophosphate. tRNA 3'-terminal CCA addition is required both for tRNA processing and repair. Also involved in tRNA surveillance by mediating tandem CCA addition to generate a CCACCA at the 3' terminus of unstable tRNAs. While stable tRNAs receive only 3'-terminal CCA, unstable tRNAs are marked with CCACCA and rapidly degraded. This chain is Multifunctional CCA protein, found in Acidovorax sp. (strain JS42).